The following is a 493-amino-acid chain: Cytochrome P450 monooxygenase mfmF (493 aa).

The next 2 membrane-spanning stretches (helical) occupy residues Ser3–Phe23 and Val301–Val321. Cys440 serves as a coordination point for heme.

The protein belongs to the cytochrome P450 family. Heme is required as a cofactor.

The protein resides in the membrane. Its pathway is secondary metabolite biosynthesis; terpenoid biosynthesis. Cytochrome P450 monooxygenase; part of the gene cluster that mediates the biosynthesis of the phthalide-terpenoid hybrid 11'-O-desmethylfendlerol. Within the pathway, mfmF catalyzes C-3 hydroxylation of 5-hydroxy-4-(hydroxymethyl)-7-methoxy-6-methylphthalide to yield cyclopolic acid. The biosynthesis of 11'-O-desmethylfendlerol begins with the NR-PKS mfmB that forms 3,5-dimethylorsellinic acid (DMOA), which is then transformed into the phthalide 5,7-dihydroxy-4-(hydroxymethyl)-6-methylphthalide by the cytochrome P450 monooxygenase mfmA and the hydrolase mfmC. Subsequently, the methyltransferase mfmE catalyzes 7-O-methylation to yield 5-hydroxy-4-(hydroxymethyl)-7-methoxy-6-methylphthalide, which undergoes C-3 hydroxylation by the cytochrome P450 monooxygenase mfmF. The resultant cyclopolic acid (2,5-dihydroxy-4-(hydroxymethyl)-7-methoxy-6-methylphthalide) is then farnesylated by the DMATS-type prenyltransferase mfmD to afford 5-O-farnesylcyclopolic acid. Finally, the Pyr4-family terpene cyclase mfmH cyclizes the farnesyl moiety of 5-O-farnesylcyclopolic acid into a drimane-like structure, thus completing the biosynthesis of 11'-O-desmethylfendlerol. This chain is Cytochrome P450 monooxygenase mfmF, found in Annulohypoxylon moriforme (Filamentous fungus).